A 227-amino-acid chain; its full sequence is MTLSFFDQFMSPTYLGIPLIAVALTLPWILFPTPSTRWLNNRLITLQGWFINRFTQQLLLPLNLGGHKWAVLLTSLMLFLITLNMLGLLPYTFTPTTQLSLNMGLAVPLWLATVIIGMRNQPTAALGHLLPEGTPVPLIPVLIIIETISLFIRPLALGVRLTANLTAGHLLIQLIATAAFVLMPIMPTVAILTSIVLFLLTLLEIAVAMIQAYVFVLLLSLYLQENV.

A run of 6 helical transmembrane segments spans residues 12–32 (PTYL…ILFP), 69–89 (WAVL…LGLL), 98–118 (QLSL…IIGM), 132–152 (EGTP…SLFI), 180–200 (FVLM…LFLL), and 202–222 (LLEI…LSLY).

It belongs to the ATPase A chain family. In terms of assembly, component of the ATP synthase complex composed at least of ATP5F1A/subunit alpha, ATP5F1B/subunit beta, ATP5MC1/subunit c (homooctomer), MT-ATP6/subunit a, MT-ATP8/subunit 8, ATP5ME/subunit e, ATP5MF/subunit f, ATP5MG/subunit g, ATP5MK/subunit k, ATP5MJ/subunit j, ATP5F1C/subunit gamma, ATP5F1D/subunit delta, ATP5F1E/subunit epsilon, ATP5PF/subunit F6, ATP5PB/subunit b, ATP5PD/subunit d, ATP5PO/subunit OSCP. ATP synthase complex consists of a soluble F(1) head domain (subunits alpha(3) and beta(3)) - the catalytic core - and a membrane F(0) domain - the membrane proton channel (subunits c, a, 8, e, f, g, k and j). These two domains are linked by a central stalk (subunits gamma, delta, and epsilon) rotating inside the F1 region and a stationary peripheral stalk (subunits F6, b, d, and OSCP). Interacts with DNAJC30; interaction is direct.

It is found in the mitochondrion inner membrane. It carries out the reaction H(+)(in) = H(+)(out). Functionally, subunit a, of the mitochondrial membrane ATP synthase complex (F(1)F(0) ATP synthase or Complex V) that produces ATP from ADP in the presence of a proton gradient across the membrane which is generated by electron transport complexes of the respiratory chain. ATP synthase complex consist of a soluble F(1) head domain - the catalytic core - and a membrane F(1) domain - the membrane proton channel. These two domains are linked by a central stalk rotating inside the F(1) region and a stationary peripheral stalk. During catalysis, ATP synthesis in the catalytic domain of F(1) is coupled via a rotary mechanism of the central stalk subunits to proton translocation. With the subunit c (ATP5MC1), forms the proton-conducting channel in the F(0) domain, that contains two crucial half-channels (inlet and outlet) that facilitate proton movement from the mitochondrial intermembrane space (IMS) into the matrix. Protons are taken up via the inlet half-channel and released through the outlet half-channel, following a Grotthuss mechanism. The protein is ATP synthase F(0) complex subunit a of Salmo salar (Atlantic salmon).